The primary structure comprises 141 residues: Transcriptional regulator MraZ (141 aa).

SpoVT-AbrB domains lie at 5 to 47 (EFEH…PAER) and 76 to 119 (AAEC…GAEH).

It belongs to the MraZ family. In terms of assembly, forms oligomers.

The protein resides in the cytoplasm. Its subcellular location is the nucleoid. The polypeptide is Transcriptional regulator MraZ (Lactiplantibacillus plantarum (strain ATCC BAA-793 / NCIMB 8826 / WCFS1) (Lactobacillus plantarum)).